An 887-amino-acid polypeptide reads, in one-letter code: MLSRLFRMHGLFVASHPWEVIVGTVTLTICMMSMNMFTGNNKICGWNYECPKFEEDVLSSDIIILTITRCIAILYIYFQFQNLRQLGSKYILGIAGLFTIFSSFVFSTVVIHFLDKELTGLNEALPFFLLLIDLSRASALAKFALSSNSQDEVRENIARGMAILGPTFTLDALVECLVIGVGTMSGVRQLEIMCCFGCMSVLANYFVFMTFFPACVSLVLELSRESREGRPIWQLSHFARVLEEEENKPNPVTQRVKMIMSLGLVLVHAHSRWIADPSPQNSTAEQSKVSLGLAEDVSKRIEPSVSLWQFYLSKMISMDIEQVITLSLALLLAVKYIFFEQAETESTLSLKNPITSPVVTPKKAQDNCCRREPLLVRRNQKLSSVEEDPGVNQDRKVEVIKPLVAEAETSGRATFVLGASAASPPLALGAQEPGIELPSEPRPNEECLQILESAEKGAKFLSDAEIIQLVNAKHIPAYKLETLMETHERGVSIRRQLLSAKLAEPSSLQYLPYRDYNYSLVMGACCENVIGYMPIPVGVAGPLCLDGKEYQVPMATTEGCLVASTNRGCRAISLGGGASSRVLADGMSRGPVVRLPRACDSAEVKSWLETPEGFAVVKEAFDSTSRFARLQKLHVTLAGRNLYIRLQSKTGDAMGMNMISKGTEKALLKLQEFFPELQILAVSGNYCTDKKPAAINWIEGRGKTVVCEAVIPAKVVREVLKTTTEAMVDVNINKNLVGSAMAGSIGGYNAHAANIVTAIYIACGQDAAQNVGSSNCITLMEASGPTNEDLYISCTMPSIEIGTVGGGTNLLPQQACLQMLGVQGACKDNPGENARQLARIVCGTVMAGELSLMAALAAGHLVRSHMVHNRSKINLQDLQGTCTKKAA.

The Cytoplasmic segment spans residues 1-9 (MLSRLFRMH). A helical membrane pass occupies residues 10–39 (GLFVASHPWEVIVGTVTLTICMMSMNMFTG). The Lumenal portion of the chain corresponds to 40–56 (NNKICGWNYECPKFEED). The helical transmembrane segment at 57-78 (VLSSDIIILTITRCIAILYIYF) threads the bilayer. Positions 61-218 (DIIILTITRC…MTFFPACVSL (158 aa)) constitute an SSD domain. The short motif at 75–78 (YIYF) is the INSIG-binding motif element. The Cytoplasmic segment spans residues 79–89 (QFQNLRQLGSK). Residue Lys-89 forms a Glycyl lysine isopeptide (Lys-Gly) (interchain with G-Cter in ubiquitin) linkage. A helical transmembrane segment spans residues 90–114 (YILGIAGLFTIFSSFVFSTVVIHFL). Over 115–123 (DKELTGLNE) the chain is Lumenal. A helical membrane pass occupies residues 124–149 (ALPFFLLLIDLSRASALAKFALSSNS). Topologically, residues 150-159 (QDEVRENIAR) are cytoplasmic. Residues 160-187 (GMAILGPTFTLDALVECLVIGVGTMSGV) traverse the membrane as a helical segment. Topologically, residues 188–191 (RQLE) are lumenal. A helical membrane pass occupies residues 192–220 (IMCCFGCMSVLANYFVFMTFFPACVSLVL). The Cytoplasmic portion of the chain corresponds to 221–248 (ELSRESREGRPIWQLSHFARVLEEEENK). A Glycyl lysine isopeptide (Lys-Gly) (interchain with G-Cter in ubiquitin) cross-link involves residue Lys-248. Residues 249–275 (PNPVTQRVKMIMSLGLVLVHAHSRWIA) traverse the membrane as a helical segment. Topologically, residues 276–314 (DPSPQNSTAEQSKVSLGLAEDVSKRIEPSVSLWQFYLSK) are lumenal. N-linked (GlcNAc...) asparagine glycosylation occurs at Asn-281. The chain crosses the membrane as a helical span at residues 315-339 (MISMDIEQVITLSLALLLAVKYIFF). The Cytoplasmic portion of the chain corresponds to 340–887 (EQAETESTLS…LQGTCTKKAA (548 aa)). Active-site charge relay system residues include Glu-558, Lys-690, and Asp-766. Catalysis depends on His-865, which acts as the Proton donor. Ser-871 is subject to Phosphoserine; by AMPK.

It belongs to the HMG-CoA reductase family. In terms of assembly, homotetramer. Homodimer. Interacts (via its SSD) with INSIG1; the interaction, accelerated by sterols, leads to the recruitment of HMGCR to AMFR/gp78 for its ubiquitination by the sterol-mediated ERAD pathway. Interacts with UBIAD1. Undergoes sterol-mediated ubiquitination and ER-associated degradation (ERAD). Accumulation of sterols in the endoplasmic reticulum (ER) membrane, triggers binding of the reductase to the ER membrane protein INSIG1 or INSIG2. The INSIG1 binding leads to the recruitment of the ubiquitin ligase, AMFR/gp78, RNF139 or RNF145, initiating ubiquitination of the reductase. The ubiquitinated reductase is then extracted from the ER membrane and delivered to cytosolic 26S proteosomes by a mechanism probably mediated by the ATPase Valosin-containing protein VCP/p97. The INSIG2-binding leads to the recruitment of the ubiquitin ligase RNF139, initiating ubiquitination of the reductase. Lys-248 is the main site of ubiquitination. Ubiquitination is enhanced by the presence of a geranylgeranylated protein. In terms of processing, N-glycosylated. Deglycosylated by NGLY1 on release from the endoplasmic reticulum (ER) in a sterol-mediated manner. Post-translationally, phosphorylated. Phosphorylation at Ser-871 reduces the catalytic activity.

Its subcellular location is the endoplasmic reticulum membrane. The protein localises to the peroxisome membrane. The enzyme catalyses (R)-mevalonate + 2 NADP(+) + CoA = (3S)-3-hydroxy-3-methylglutaryl-CoA + 2 NADPH + 2 H(+). Its pathway is metabolic intermediate biosynthesis; (R)-mevalonate biosynthesis; (R)-mevalonate from acetyl-CoA: step 3/3. With respect to regulation, regulated by a negative feedback mechanism through sterols and non-sterol metabolites derived from mevalonate. Phosphorylation at Ser-871 down-regulates the catalytic activity. Functionally, catalyzes the conversion of (3S)-hydroxy-3-methylglutaryl-CoA (HMG-CoA) to mevalonic acid, the rate-limiting step in the synthesis of cholesterol and other isoprenoids, thus plays a critical role in cellular cholesterol homeostasis. This is 3-hydroxy-3-methylglutaryl-coenzyme A reductase (Hmgcr) from Rattus norvegicus (Rat).